The primary structure comprises 365 residues: Phosphatidylcholine:ceramide cholinephosphotransferase 2 (365 aa).

The span at 1 to 14 shows a compositional bias: basic and acidic residues; the sequence is MDIIETAKLEEHLE. Residues 1-52 are disordered; the sequence is MDIIETAKLEEHLENQPSDPTNTYARPAEPVEEENKNGNGKPKSLSSGLRKG. The segment covering 15 to 24 has biased composition (polar residues); the sequence is NQPSDPTNTY. Helical transmembrane passes span 80-100, 128-148, 159-179, and 206-226; these read GIAFIYAVFNLVLTTVMITVV, FSVSEINGIILVGLWITQWLF, FCFIIGTLYLYRCITMYVTTL, and LISGGGLSITGSHILCGDFLF. Residue histidine 229 is part of the active site. A helical transmembrane segment spans residues 248–268; sequence FWWYHLICWLLSAAGIICILV. Catalysis depends on residues histidine 272 and aspartate 276. A helical transmembrane segment spans residues 275 to 295; the sequence is IDVIIAYYITTRLFWWYHSMA. Residues 296–365 are Cytoplasmic-facing; that stretch reads NEKNLKVSSQ…KIGEDNEKST (70 aa). 4 S-palmitoyl cysteine lipidation sites follow: cysteine 331, cysteine 332, cysteine 343, and cysteine 348.

Belongs to the sphingomyelin synthase family. Post-translationally, palmitoylated on Cys-331, Cys-332, Cys-343 and Cys-348; which plays an important role in plasma membrane localization. As to expression, brain, heart, kidney, liver, muscle and stomach. Also expressed in a number of cell lines such as carcinoma HeLa cells, hepatoma Hep-G2 cells, and colon carcinoma Caco-2 cells.

The protein localises to the cell membrane. The protein resides in the golgi apparatus membrane. It carries out the reaction an N-acylsphing-4-enine + a 1,2-diacyl-sn-glycero-3-phosphocholine = a sphingomyelin + a 1,2-diacyl-sn-glycerol. The catalysed reaction is an N-acylsphinganine + a 1,2-diacyl-sn-glycero-3-phosphocholine = an N-acylsphinganine-1-phosphocholine + a 1,2-diacyl-sn-glycerol. The enzyme catalyses an N-acyl-(4R)-4-hydroxysphinganine + a 1,2-diacyl-sn-glycero-3-phosphocholine = an N-acyl-(4R)-4-hydroxysphinganine-phosphocholine + a 1,2-diacyl-sn-glycerol. It catalyses the reaction an N-acylsphinganine + a 1,2-diacyl-sn-glycero-3-phosphoethanolamine = an N-acylsphinganine-1-phosphoethanolamine + a 1,2-diacyl-sn-glycerol. It carries out the reaction an N-acyl-(4R)-4-hydroxysphinganine + a 1,2-diacyl-sn-glycero-3-phosphoethanolamine = an N-acyl-(4R)-4-hydroxysphinganine-1-phosphoethanolamine + a 1,2-diacyl-sn-glycerol. The catalysed reaction is an N-acylsphing-4-enine + a 1,2-diacyl-sn-glycero-3-phosphoethanolamine = an N-acylsphing-4-enine 1-phosphoethanolamine + a 1,2-diacyl-sn-glycerol. The enzyme catalyses 1,2-dihexadecanoyl-sn-glycero-3-phosphocholine + an N-acylsphing-4-enine = 1,2-dihexadecanoyl-sn-glycerol + a sphingomyelin. It catalyses the reaction 1-(9Z-octadecenoyl)-2-acyl-sn-3-glycerol + a sphingomyelin = a 1-(9Z-octadecenoyl)-2-acyl-sn-glycero-3-phosphocholine + an N-acylsphing-4-enine. It carries out the reaction N-hexadecanoylsphinganine + a 1,2-diacyl-sn-glycero-3-phosphocholine = N-hexadecanoyl-sphinganine-1-phosphocholine + a 1,2-diacyl-sn-glycerol. The catalysed reaction is N-hexadecanoyl-(4R)-hydroxysphinganine + a 1,2-diacyl-sn-glycero-3-phosphocholine = N-hexadecanoyl-(4R)-hydroxysphinganine-phosphocholine + a 1,2-diacyl-sn-glycerol. The enzyme catalyses N-hexadecanoylsphinganine + a 1,2-diacyl-sn-glycero-3-phosphoethanolamine = N-hexadecanoyl-sphinganine-1-phosphoethanolamine + a 1,2-diacyl-sn-glycerol. It catalyses the reaction N-hexadecanoyl-(4R)-hydroxysphinganine + a 1,2-diacyl-sn-glycero-3-phosphoethanolamine = N-hexadecanoyl-(4R)-hydroxysphinganine-1-phosphoethanolamine + a 1,2-diacyl-sn-glycerol. The protein operates within sphingolipid metabolism. Inhibited by bacterial PC-phospholipase C inhibitor D609. Its function is as follows. Sphingomyelin synthase that primarily contributes to sphingomyelin synthesis and homeostasis at the plasma membrane. Catalyzes the reversible transfer of phosphocholine moiety in sphingomyelin biosynthesis: in the forward reaction transfers phosphocholine head group of phosphatidylcholine (PC) on to ceramide (CER) to form ceramide phosphocholine (sphingomyelin, SM) and diacylglycerol (DAG) as by-product, and in the reverse reaction transfers phosphocholine from SM to DAG to form PC and CER. The direction of the reaction appears to depend on the levels of CER and DAG in the plasma membrane. Does not use free phosphorylcholine or CDP-choline as donors. Can also transfer phosphoethanolamine head group of phosphatidylethanolamine (PE) on to ceramide (CER) to form ceramide phosphoethanolamine (CPE). Regulates receptor-mediated signal transduction via mitogenic DAG and proapoptotic CER, as well as via SM, a structural component of membrane rafts that serve as platforms for signal transduction and protein sorting. To a lesser extent, plays a role in secretory transport via regulation of DAG pool at the Golgi apparatus and its downstream effects on PRKD1. Required for normal bone matrix mineralization. The sequence is that of Phosphatidylcholine:ceramide cholinephosphotransferase 2 from Homo sapiens (Human).